The primary structure comprises 289 residues: Acetyl-coenzyme A carboxylase carboxyl transferase subunit beta (289 aa).

Residues 24 to 289 form the CoA carboxyltransferase N-terminal domain; the sequence is LWTNCESCGQ…RQKTVSDAAA (266 aa). Positions 28, 31, 47, and 50 each coordinate Zn(2+). The C4-type zinc-finger motif lies at 28–50; that stretch reads CESCGQMMLTKELERSEKVCPHC.

This sequence belongs to the AccD/PCCB family. Acetyl-CoA carboxylase is a heterohexamer composed of biotin carboxyl carrier protein (AccB), biotin carboxylase (AccC) and two subunits each of ACCase subunit alpha (AccA) and ACCase subunit beta (AccD). Zn(2+) is required as a cofactor.

It localises to the cytoplasm. The enzyme catalyses N(6)-carboxybiotinyl-L-lysyl-[protein] + acetyl-CoA = N(6)-biotinyl-L-lysyl-[protein] + malonyl-CoA. The protein operates within lipid metabolism; malonyl-CoA biosynthesis; malonyl-CoA from acetyl-CoA: step 1/1. Its function is as follows. Component of the acetyl coenzyme A carboxylase (ACC) complex. Biotin carboxylase (BC) catalyzes the carboxylation of biotin on its carrier protein (BCCP) and then the CO(2) group is transferred by the transcarboxylase to acetyl-CoA to form malonyl-CoA. The sequence is that of Acetyl-coenzyme A carboxylase carboxyl transferase subunit beta from Gluconobacter oxydans (strain 621H) (Gluconobacter suboxydans).